Reading from the N-terminus, the 183-residue chain is Caltractin ICL1c (183 aa).

Residues 1–30 (MARRGQQPPPQQQQAPPTQKNQAGKFNPAE) are disordered. 4 EF-hand domains span residues 39–74 (EEVLEIKEAFDLFDTDGTQSIDPKELKAAMTSLGFE), 75–110 (AKNQTIYQMISDLDTDGSGQIDFAEFLKLMTARISE), 112–147 (DSKADIQKVFNLFDSERAGVITLKDLRKVAKELGET), and 148–183 (MDDSELQEMIDRADSDGDAQVTFEDFYNIMTKKTFA). Ca(2+) contacts are provided by Asp52, Asp54, Thr56, Ser58, Glu63, Asp88, Asp90, Ser92, Gln94, and Glu99.

The protein belongs to the centrin family. Monomer.

It localises to the cytoplasm. It is found in the cytoskeleton. Its function is as follows. Plays a fundamental role in microtubule organizing center structure and function. Component of the infraciliary lattice (ICL) and the ciliary basal bodies. In Paramecium tetraurelia, this protein is Caltractin ICL1c (Icl1c).